Here is a 405-residue protein sequence, read N- to C-terminus: Serpin I2 (405 aa).

Residues 1–18 (MNKTILWSFLLFFSGSQT) form the signal peptide. N-linked (GlcNAc...) asparagine glycosylation is present at asparagine 306.

This sequence belongs to the serpin family. In terms of tissue distribution, expressed in pancreas.

Its subcellular location is the secreted. The chain is Serpin I2 (Serpini2) from Mus musculus (Mouse).